The primary structure comprises 996 residues: ER membrane protein complex subunit 1 (996 aa).

A signal peptide spans 1-22 (MAAEWASRFWLWAALLIPVAAV). At 23 to 965 (YEDQVGKFDW…FDVLKDDYDY (943 aa)) the chain is on the lumenal side. Cystine bridges form between Cys227/Cys237 and Cys338/Cys368. Asn916 carries an N-linked (GlcNAc...) asparagine glycan. The helical transmembrane segment at 966–986 (VLISSVLFGLVFATMITKRLA) threads the bilayer. The Cytoplasmic portion of the chain corresponds to 987 to 996 (QVKLLNRAWR).

The protein belongs to the EMC1 family. In terms of assembly, component of the ER membrane protein complex (EMC).

The protein localises to the endoplasmic reticulum membrane. In terms of biological role, part of the endoplasmic reticulum membrane protein complex (EMC) that enables the energy-independent insertion into endoplasmic reticulum membranes of newly synthesized membrane proteins. Preferentially accommodates proteins with transmembrane domains that are weakly hydrophobic or contain destabilizing features such as charged and aromatic residues. Involved in the cotranslational insertion of multi-pass membrane proteins in which stop-transfer membrane-anchor sequences become ER membrane spanning helices. It is also required for the post-translational insertion of tail-anchored/TA proteins in endoplasmic reticulum membranes. By mediating the proper cotranslational insertion of N-terminal transmembrane domains in an N-exo topology, with translocated N-terminus in the lumen of the ER, controls the topology of multi-pass membrane proteins like the G protein-coupled receptors. By regulating the insertion of various proteins in membranes, it is indirectly involved in many cellular processes. In Pongo abelii (Sumatran orangutan), this protein is ER membrane protein complex subunit 1 (EMC1).